Reading from the N-terminus, the 321-residue chain is Acetyl-coenzyme A carboxylase carboxyl transferase subunit alpha (321 aa).

The region spanning 37-298 (DLDDEIKRLQ…KQRILSDLED (262 aa)) is the CoA carboxyltransferase C-terminal domain.

This sequence belongs to the AccA family. Acetyl-CoA carboxylase is a heterohexamer composed of biotin carboxyl carrier protein (AccB), biotin carboxylase (AccC) and two subunits each of ACCase subunit alpha (AccA) and ACCase subunit beta (AccD).

Its subcellular location is the cytoplasm. It catalyses the reaction N(6)-carboxybiotinyl-L-lysyl-[protein] + acetyl-CoA = N(6)-biotinyl-L-lysyl-[protein] + malonyl-CoA. It functions in the pathway lipid metabolism; malonyl-CoA biosynthesis; malonyl-CoA from acetyl-CoA: step 1/1. Component of the acetyl coenzyme A carboxylase (ACC) complex. First, biotin carboxylase catalyzes the carboxylation of biotin on its carrier protein (BCCP) and then the CO(2) group is transferred by the carboxyltransferase to acetyl-CoA to form malonyl-CoA. The protein is Acetyl-coenzyme A carboxylase carboxyl transferase subunit alpha of Mannheimia succiniciproducens (strain KCTC 0769BP / MBEL55E).